Here is a 515-residue protein sequence, read N- to C-terminus: Cytochrome P450 monooxygenase nsrP (515 aa).

A helical membrane pass occupies residues 20 to 40 (FGTAAFLAVLLSALAFLSYTP). N-linked (GlcNAc...) asparagine glycans are attached at residues N84, N406, and N411. C452 contacts heme.

The protein belongs to the cytochrome P450 family. Requires heme as cofactor.

The protein resides in the membrane. Its pathway is secondary metabolite biosynthesis. Its function is as follows. Cytochrome P450 monooxygenase; part of the gene cluster that mediates the biosynthesis of the tetrahydroxanthone dimer neosartorin, which exhibits antibacterial activity. The two different monomeric units appear to be synthesized by the same set of enzymes, among which the Baeyer-Villiger monooxygenase nsrF is the key enzyme for the divergence of the biosynthetic routes. The pathway begins with the synthesis of atrochrysone thioester by the polyketide synthase nsrB. The atrochrysone carboxyl ACP thioesterase nsrC then breaks the thioester bond and releases the atrochrysone carboxylic acid from AacuL. Atrochrysone carboxylic acid is decarboxylated by the decarboxylase nsrE, and oxidized by the anthrone oxygenase nsrD to yield emodin. Emodin is then reduced to emodin hydroquinone by the oxidoreductase nsrR. A-ring reduction by the short chain dehydrogenase nsrJ, dehydration by the scytalone dehydratase-like protein nsrI and probable spontaneous re-oxidation, results in overall deoxygenation to chrysophanol. The Baeyer-Villiger monooxygenase nsrF accepts chrysophanol as a substrate to insert one oxygen atom at two different positions to yield the precursors of both monomric units. NsrF is promiscuous/flexible in interacting with the 2 (non methylated and methylated) aromatic rings of chrysophanol, thus diverging the biosynthetic pathway at this point. After the hydrolysis of the lactones, methylesterification by the methyltransferase nsrG yields respectively moniliphenone and 2,2',6'-trihydroxy-4-methyl-6-methoxya-cyldiphenylmethanone. The next steps are the hydroxylation by the FAD-dependent monooxygenase nsrK, followed by isomerization by the monooxygenase nsrQ. The short chain dehydrogenase/reductase nsrO then catalyzes the C-5 ketoreduction to give the xanthone skeleton of blennolide C and 5-acetylblennolide A. The acetyltransferase nsrL has a strict substrate specificity and uses only blennolide A but not blennolide C to yield 5-acetylblennolide A as the single-acetylated product. In the final step of the biosynthesis, the heterodimerization of the 2 xanthones, blennolide C and 5-acetylblennolide A, is catalyzed by the cytochrome P450 monooxygenase nsrP. NsrP can utilize at least three different xanthones as its substrates to perform the dimerization reaction. In Aspergillus novofumigatus (strain IBT 16806), this protein is Cytochrome P450 monooxygenase nsrP.